Reading from the N-terminus, the 432-residue chain is Ribosomal protein uS12 methylthiotransferase RimO (432 aa).

The 119-residue stretch at K4–H122 folds into the MTTase N-terminal domain. [4Fe-4S] cluster-binding residues include C13, C51, C85, C146, C150, and C153. One can recognise a Radical SAM core domain in the interval T132–E363. In terms of domain architecture, TRAM spans A366 to I432.

The protein belongs to the methylthiotransferase family. RimO subfamily. Requires [4Fe-4S] cluster as cofactor.

The protein resides in the cytoplasm. The enzyme catalyses L-aspartate(89)-[ribosomal protein uS12]-hydrogen + (sulfur carrier)-SH + AH2 + 2 S-adenosyl-L-methionine = 3-methylsulfanyl-L-aspartate(89)-[ribosomal protein uS12]-hydrogen + (sulfur carrier)-H + 5'-deoxyadenosine + L-methionine + A + S-adenosyl-L-homocysteine + 2 H(+). In terms of biological role, catalyzes the methylthiolation of an aspartic acid residue of ribosomal protein uS12. This Bacteroides fragilis (strain ATCC 25285 / DSM 2151 / CCUG 4856 / JCM 11019 / LMG 10263 / NCTC 9343 / Onslow / VPI 2553 / EN-2) protein is Ribosomal protein uS12 methylthiotransferase RimO.